The chain runs to 317 residues: 4-diphosphocytidyl-2-C-methyl-D-erythritol kinase (317 aa).

Lysine 11 is an active-site residue. 99-109 (PVAAGLAGGST) contributes to the ATP binding site. The active site involves aspartate 141.

This sequence belongs to the GHMP kinase family. IspE subfamily.

It carries out the reaction 4-CDP-2-C-methyl-D-erythritol + ATP = 4-CDP-2-C-methyl-D-erythritol 2-phosphate + ADP + H(+). It participates in isoprenoid biosynthesis; isopentenyl diphosphate biosynthesis via DXP pathway; isopentenyl diphosphate from 1-deoxy-D-xylulose 5-phosphate: step 3/6. Catalyzes the phosphorylation of the position 2 hydroxy group of 4-diphosphocytidyl-2C-methyl-D-erythritol. The chain is 4-diphosphocytidyl-2-C-methyl-D-erythritol kinase from Nostoc sp. (strain PCC 7120 / SAG 25.82 / UTEX 2576).